Consider the following 418-residue polypeptide: Lactosylceramide alpha-2,3-sialyltransferase (418 aa).

The disordered stretch occupies residues 1 to 25 (MRTKAAGCAERRPLQPRTEAAAAPA). At 1–61 (MRTKAAGCAE…RAQSKMRRPS (61 aa)) the chain is on the cytoplasmic side. The chain crosses the membrane as a helical; Signal-anchor for type II membrane protein span at residues 62-82 (LLLKDILKCTLLVFGVWILYI). Residues 83-418 (LKLNYTTEEC…DLSGGIDREF (336 aa)) lie on the Lumenal side of the membrane. N-linked (GlcNAc...) asparagine glycosylation is found at Asn-86, Asn-236, and Asn-390. A disulfide bridge links Cys-195 with Cys-353.

It belongs to the glycosyltransferase 29 family. In terms of processing, N-glycosylated. In terms of tissue distribution, ubiquitous. High expression in brain, skeletal muscle, placenta, and testis. mRNA widely distributed in human brain, but slightly elevated expression was observed in the cerebral cortex, temporal lobe, and putamen.

It localises to the golgi apparatus membrane. It catalyses the reaction a beta-D-Gal-(1-&gt;4)-beta-D-Glc-(1&lt;-&gt;1)-Cer(d18:1(4E)) + CMP-N-acetyl-beta-neuraminate = a ganglioside GM3 (d18:1(4E)) + CMP + H(+). The enzyme catalyses ganglioside GA2 (d18:1(4E)/18:0) + CMP-N-acetyl-beta-neuraminate = ganglioside GM2 (d18:1(4E)/18:0) + CMP + H(+). The catalysed reaction is a beta-D-Gal-(1&lt;-&gt;1')-ceramide + CMP-N-acetyl-beta-neuraminate = N-acetyl-alpha-neuraminosyl-(2-&gt;3)-beta-D-galactosyl-(1&lt;-&gt;1')-ceramide + CMP + H(+). It carries out the reaction a beta-D-galactosyl-(1&lt;-&gt;1')-N-acylsphing-4-enine + CMP-N-acetyl-beta-neuraminate = a ganglioside GM4 (d18:1(4E)) + CMP + H(+). It catalyses the reaction ganglioside GA1 (d18:1(4E)/18:0) + CMP-N-acetyl-beta-neuraminate = ganglioside GM1 (d18:1(4E)/18:0) + CMP + H(+). The protein operates within glycolipid biosynthesis. Transfers the sialyl group (N-acetyl-alpha-neuraminyl or NeuAc) from CMP-NeuAc to the non-reducing terminal galactose (Gal) of glycosphingolipids forming gangliosides (important molecules involved in the regulation of multiple cellular processes, including cell proliferation and differentiation, apoptosis, embryogenesis, development, and oncogenesis). Mainly involved in the biosynthesis of ganglioside GM3 but can also use different glycolipids as substrate acceptors such as D-galactosylceramide (GalCer), asialo-GM2 (GA2) and asialo-GM1 (GA1), although less preferentially than beta-D-Gal-(1-&gt;4)-beta-D-Glc-(1&lt;-&gt;1)-Cer (LacCer). The polypeptide is Lactosylceramide alpha-2,3-sialyltransferase (ST3GAL5) (Homo sapiens (Human)).